We begin with the raw amino-acid sequence, 213 residues long: ATP-dependent dethiobiotin synthetase BioD 2 (213 aa).

13-18 (DIGKTI) is an ATP binding site. T17 is a Mg(2+) binding site. K38 is a catalytic residue. T42 contributes to the substrate binding site. Residues D50 and 115-118 (EGAG) contribute to the ATP site. Mg(2+)-binding residues include D50 and E115.

Belongs to the dethiobiotin synthetase family. In terms of assembly, homodimer. It depends on Mg(2+) as a cofactor.

It is found in the cytoplasm. The catalysed reaction is (7R,8S)-7,8-diammoniononanoate + CO2 + ATP = (4R,5S)-dethiobiotin + ADP + phosphate + 3 H(+). Its pathway is cofactor biosynthesis; biotin biosynthesis; biotin from 7,8-diaminononanoate: step 1/2. In terms of biological role, catalyzes a mechanistically unusual reaction, the ATP-dependent insertion of CO2 between the N7 and N8 nitrogen atoms of 7,8-diaminopelargonic acid (DAPA, also called 7,8-diammoniononanoate) to form a ureido ring. This chain is ATP-dependent dethiobiotin synthetase BioD 2, found in Pasteurella multocida (strain Pm70).